We begin with the raw amino-acid sequence, 236 residues long: MTAPWADWDHVLKIDPDKSLVDGETFDDIAQTGTDAIEIGGTLDVTTEKMRRVIDACRTHEVPLYQEPSNPAVVVEDEALDGYLVPVVLNAGDPFWITGAHKEWVRIADLDWERTTTEAYIVMNPDASVAEYTGADCGLDADEVGAYATVAERLLGQEVVYVEYSGTLGDPAVVEAAAGGVDDAAVFYGGGIDGYDAAYRMGAHADTIVVGDLVHEAGVDAVRETVSGVRDAQAEE.

Residue Lys13 coordinates sn-glycerol 1-phosphate. Mg(2+) is bound by residues Asp15 and Thr42. Residues 161 to 166 (YVEYSG), Gly191, and 211 to 212 (GD) contribute to the sn-glycerol 1-phosphate site.

This sequence belongs to the GGGP/HepGP synthase family. Group I subfamily. The cofactor is Mg(2+).

The protein resides in the cytoplasm. It catalyses the reaction sn-glycerol 1-phosphate + (2E,6E,10E)-geranylgeranyl diphosphate = sn-3-O-(geranylgeranyl)glycerol 1-phosphate + diphosphate. It participates in membrane lipid metabolism; glycerophospholipid metabolism. Functionally, prenyltransferase that catalyzes the transfer of the geranylgeranyl moiety of geranylgeranyl diphosphate (GGPP) to the C3 hydroxyl of sn-glycerol-1-phosphate (G1P). This reaction is the first ether-bond-formation step in the biosynthesis of archaeal membrane lipids. The polypeptide is Geranylgeranylglyceryl phosphate synthase (Halobacterium salinarum (strain ATCC 700922 / JCM 11081 / NRC-1) (Halobacterium halobium)).